The sequence spans 214 residues: Phosphoenolpyruvate guanylyltransferase 2 (214 aa).

Phosphoenolpyruvate-binding residues include Thr135, Gly150, and Ser153.

It belongs to the CofC family.

The enzyme catalyses phosphoenolpyruvate + GTP + H(+) = enolpyruvoyl-2-diphospho-5'-guanosine + diphosphate. It participates in cofactor biosynthesis; coenzyme F420 biosynthesis. Functionally, guanylyltransferase that catalyzes the activation of phosphoenolpyruvate (PEP) as enolpyruvoyl-2-diphospho-5'-guanosine, via the condensation of PEP with GTP. It is involved in the biosynthesis of coenzyme F420, a hydride carrier cofactor. This is Phosphoenolpyruvate guanylyltransferase 2 from Rhodococcus jostii (strain RHA1).